The sequence spans 262 residues: MVLIRVLANLLILQLSYAQKSSELVIGGDECNINEHNFLVALYEYWSQSFLCGGTLINGEWVLTAAHCDRKHILIYVGVHDRSVQFDKEQRRFPKEKYFFNCRNNFTKWDKDIMLIRLNKPVSYSEHIAPLSLPSSPPIVGSVCRVMGWGTIKSPQETLPDVPHCANINLLDYEVCRTAHPQFRLPATSRILCAGVLEGGIDTCHRDSGGPLICNGEFQGIVSWGDGPCAQPDKPALYSKVFDHLDWIQNIIAGSETVNCPS.

The first 18 residues, 1 to 18 (MVLIRVLANLLILQLSYA), serve as a signal peptide directing secretion. Positions 19-262 (QKSSELVIGG…AGSETVNCPS (244 aa)) are excised as a propeptide. The 229-residue stretch at 25 to 253 (VIGGDECNIN…HLDWIQNIIA (229 aa)) folds into the Peptidase S1 domain. 6 disulfide bridges follow: cysteine 31–cysteine 165, cysteine 52–cysteine 68, cysteine 102–cysteine 260, cysteine 144–cysteine 214, cysteine 176–cysteine 193, and cysteine 204–cysteine 229. Catalysis depends on histidine 67, which acts as the Charge relay system. The N-linked (GlcNAc...) asparagine glycan is linked to asparagine 105. Catalysis depends on aspartate 112, which acts as the Charge relay system. Serine 208 serves as the catalytic Charge relay system.

This sequence belongs to the peptidase S1 family. Snake venom subfamily. Monomer. As to expression, expressed by the venom gland.

It localises to the secreted. Thrombin-like snake venom serine protease. Displays a specificity similar to trypsin. Releases only fibrinopeptide A in the conversion of fibrinogen to fibrin. Reversibly increases the permeability of the blood brain barrier (BBB) in mice. Induces the barrel rotation syndrome in mice, which is manifested by gyroxin-like, rapid rolling motions. This syndrome may be due to its effect on BBB permeability, and certainly also to other actions affecting endogenous substrates present in the endothelium, nervous tissues or blood. Also shows a moderate inhibitory activity on the human voltage-gated potassium channel Kv10.1/KCNH1/EAG1 (58% current inhibition at 5 uM). It blocks Kv10.1/KCNH1/EAG1 in a time and dose-dependent manner and with a mechanism independent of its enzymatic activity. It may have a preference in interacting with Kv10.1/KCNH1/EAG1 in its closed state, since the inhibitory effect of the toxin is decreased at more depolarized potentials. The protein is Thrombin-like enzyme gyroxin B1.3 of Crotalus durissus terrificus (South American rattlesnake).